We begin with the raw amino-acid sequence, 695 residues long: MLSAPSSSTTPASPPTSPPNTTSSDDFAVLKEPKVEAILNSELGLAILNDRIKDYLLTCKELAGFFKKRSILEEESGKNLQKLAKSYLETFQSKHHSPQSFSASVITSMEIHEQLANHSLTLQKTLSAFSDQVIEFHKNAERKRKSIKEYAKKQENAYLEAVMQMDKSKSRFKGAETEYNRALDNKNTGDSQKKVGFFKPKSNAQLTKLEDEARLKAENAESDMHSKIENAQNVQKQLLCIHRPNYIKQFFSLQREIESSLIANYLRYTKLCESNTLLNGLTIRPQKPTPTNCGLQHALDNINANTDFVQYVLHASIKHEDNKNPTDASKTKIIQPPSSYGTGSSAGKTNPPVNPTIKVTAAIPSPLQNTNPAPSTFPNPSVASPAFPNSSTSNPSTAPASASPLASTLKPSTANDTNGSSSSSSSNPRTSSPLASNAENKPPVAQQSPPVLLPTLPPIQTTTIQTSREVAPPPSSINSNRAASPFRPTSVSPQPSSPTKSLLFGARLDAIILREHSNIPNIVMQCTSQVENFGLNLQGIYRVPSSSARVNMLRSQFENNPLLQLHTPEDYENDVHAVADLLKIFFRELREPLIPDNHQRDFIDAGNVEDESRRRDAVHRAINDLPDANYSTIRHLTIHLAKIKENSDVNKMSTNNLAIIWGPTIIKQATIPEISSFSRTIEILIDYCFTIFDYD.

The segment covering 1 to 11 has biased composition (low complexity); the sequence is MLSAPSSSTTP. Positions 1–26 are disordered; that stretch reads MLSAPSSSTTPASPPTSPPNTTSSDD. An F-BAR domain is found at 33–307; the sequence is PKVEAILNSE…ALDNINANTD (275 aa). Positions 320–499 are disordered; sequence EDNKNPTDAS…SVSPQPSSPT (180 aa). Composition is skewed to polar residues over residues 336 to 348 and 366 to 382; these read PPSS…SAGK and PLQN…NPSV. 3 stretches are compositionally biased toward low complexity: residues 383-432, 458-467, and 488-499; these read ASPA…RTSS, PIQTTTIQTS, and PTSVSPQPSSPT. 2 positions are modified to phosphoserine: Ser496 and Ser497. The Rho-GAP domain maps to 506 to 692; it reads ARLDAIILRE…ILIDYCFTIF (187 aa).

The polypeptide is Probable Rho-GTPase-activating protein 7 (rga7) (Schizosaccharomyces pombe (strain 972 / ATCC 24843) (Fission yeast)).